The primary structure comprises 361 residues: Serpentine receptor class epsilon-32 (361 aa).

7 helical membrane passes run 34–54 (IIEL…LYVM), 66–86 (ILYI…LITI), 124–144 (LLIF…YGIL), 168–188 (IPIA…LSVL), 195–215 (FLSH…YLFI), 256–276 (LVFV…ALAF), and 286–306 (FVEN…MLTI).

The protein belongs to the nematode receptor-like protein sre family.

Its subcellular location is the membrane. This Caenorhabditis elegans protein is Serpentine receptor class epsilon-32 (sre-32).